We begin with the raw amino-acid sequence, 460 residues long: Cysteine--tRNA ligase (460 aa).

Cys-29 lines the Zn(2+) pocket. Positions 31–41 match the 'HIGH' region motif; it reads ATPQSSPHIGH. Residues Cys-212, His-237, and Glu-241 each contribute to the Zn(2+) site. Residues 268–272 carry the 'KMSKS' region motif; sequence KMSKS. Lys-271 is an ATP binding site.

It belongs to the class-I aminoacyl-tRNA synthetase family. As to quaternary structure, monomer. Zn(2+) serves as cofactor.

The protein localises to the cytoplasm. It carries out the reaction tRNA(Cys) + L-cysteine + ATP = L-cysteinyl-tRNA(Cys) + AMP + diphosphate. The protein is Cysteine--tRNA ligase of Corynebacterium glutamicum (strain R).